A 155-amino-acid chain; its full sequence is Interleukin-2 (155 aa).

An N-terminal signal peptide occupies residues 1-20; that stretch reads MYSMQLASCVALTLVLLVNS. Thr23 is a glycosylation site (O-linked (GalNAc...) threonine). A disulfide bridge connects residues Cys78 and Cys126.

Belongs to the IL-2 family.

It is found in the secreted. In terms of biological role, cytokine produced by activated CD4-positive helper T-cells and to a lesser extend activated CD8-positive T-cells and natural killer (NK) cells that plays pivotal roles in the immune response and tolerance. Binds to a receptor complex composed of either the high-affinity trimeric IL-2R (IL2RA/CD25, IL2RB/CD122 and IL2RG/CD132) or the low-affinity dimeric IL-2R (IL2RB and IL2RG). Interaction with the receptor leads to oligomerization and conformation changes in the IL-2R subunits resulting in downstream signaling starting with phosphorylation of JAK1 and JAK3. In turn, JAK1 and JAK3 phosphorylate the receptor to form a docking site leading to the phosphorylation of several substrates including STAT5. This process leads to activation of several pathways including STAT, phosphoinositide-3-kinase/PI3K and mitogen-activated protein kinase/MAPK pathways. Functions as a T-cell growth factor and can increase NK-cell cytolytic activity as well. Promotes strong proliferation of activated B-cells and subsequently immunoglobulin production. Plays a pivotal role in regulating the adaptive immune system by controlling the survival and proliferation of regulatory T-cells, which are required for the maintenance of immune tolerance. Moreover, participates in the differentiation and homeostasis of effector T-cell subsets, including Th1, Th2, Th17 as well as memory CD8-positive T-cells. The chain is Interleukin-2 (Il2) from Rattus norvegicus (Rat).